Consider the following 212-residue polypeptide: MFAEYGVLNYWTYLVGAIFIVLVPGPNTLFVLKNSVSSGMKGGYLAACGVFIGDAVLMFLAWAGMATLIKTTPILFNIVRYLGAFYLLYLGSKILYATLKGKNNEAKSDEPQYGAIFKRALILSLTNPKAILFYVSFFVQFIDVNAPHTGISFFILATTLELVSFCYLSFLIISGAFVTQYIRTKKKLAKVGNSLIGLMFVGFAARLATLQS.

The next 6 helical transmembrane spans lie at 12 to 32, 49 to 69, 71 to 91, 122 to 142, 153 to 173, and 188 to 208; these read TYLV…LFVL, GVFI…ATLI, TTPI…LYLG, ILSL…VQFI, FFIL…FLII, and LAKV…ARLA.

This sequence belongs to the Rht family.

Its subcellular location is the cell inner membrane. The enzyme catalyses L-leucine(in) + H(+)(out) = L-leucine(out) + H(+)(in). Its function is as follows. Exporter of leucine. The protein is Leucine efflux protein (leuE) of Escherichia coli O157:H7.